The chain runs to 208 residues: UPF0637 protein lp_2332 (208 aa).

Belongs to the UPF0637 family.

The sequence is that of UPF0637 protein lp_2332 from Lactiplantibacillus plantarum (strain ATCC BAA-793 / NCIMB 8826 / WCFS1) (Lactobacillus plantarum).